Reading from the N-terminus, the 118-residue chain is Late cornified envelope protein 1B (118 aa).

Residues 87–118 form a disordered region; that stretch reads CHRPQSSGCCSQPSGGSSCCGGGSGQHSGGCC. Over residues 90–103 the composition is skewed to low complexity; the sequence is PQSSGCCSQPSGGS. Gly residues predominate over residues 104–118; the sequence is SCCGGGSGQHSGGCC.

The protein belongs to the LCE family. In terms of assembly, interacts with CYSRT1; the interaction is direct. In terms of tissue distribution, skin-specific. Expression was readily detected in adult trunk skin, adult arm skin, fetal skin, penal skin, vulva, esophagus and tongue. Not expressed in the cervix, rectum, lung, colon, or placenta.

In terms of biological role, precursors of the cornified envelope of the stratum corneum. The polypeptide is Late cornified envelope protein 1B (LCE1B) (Homo sapiens (Human)).